A 257-amino-acid chain; its full sequence is 1-acyl-sn-glycerol-3-phosphate acyltransferase (257 aa).

A helical transmembrane segment spans residues 10-30; the sequence is VLFYLLLSASAFVWGTLSFFI. The HXXXXD motif signature appears at 82–87; it reads HQSTWE. A helical membrane pass occupies residues 105-125; it reads ELLYVPFFGWALALLKPIAID.

This sequence belongs to the 1-acyl-sn-glycerol-3-phosphate acyltransferase family.

It localises to the cell inner membrane. It catalyses the reaction a 1-acyl-sn-glycero-3-phosphate + an acyl-CoA = a 1,2-diacyl-sn-glycero-3-phosphate + CoA. Its pathway is phospholipid metabolism; CDP-diacylglycerol biosynthesis; CDP-diacylglycerol from sn-glycerol 3-phosphate: step 2/3. Converts lysophosphatidic acid (LPA) into phosphatidic acid by incorporating acyl moiety at the 2 position. The sequence is that of 1-acyl-sn-glycerol-3-phosphate acyltransferase from Pseudomonas aeruginosa (strain ATCC 15692 / DSM 22644 / CIP 104116 / JCM 14847 / LMG 12228 / 1C / PRS 101 / PAO1).